A 673-amino-acid chain; its full sequence is Protein kinase C delta type (673 aa).

The region spanning 1-106 is the C2 domain; it reads MAPFLRISFN…KNNGKAEFWL (106 aa). Thr-43 and Thr-50 each carry phosphothreonine. Position 64 is a phosphotyrosine (Tyr-64). Ser-130 carries the phosphoserine modification. Position 141 is a phosphothreonine (Thr-141). Tyr-155 is subject to Phosphotyrosine. Residues 158-208 form a Phorbol-ester/DAG-type 1 zinc finger; the sequence is NHEFIATFFGQPTFCSVCKEFVWGLNKQGYKCRQCNAAIHKKCIDKIIGRC. Residue Thr-218 is modified to Phosphothreonine. The segment at 230–280 adopts a Phorbol-ester/DAG-type 2 zinc-finger fold; that stretch reads PHRFKVYNYMSPTFCDHCGTLLWGLVKQGLKCEDCGMNVHHKCREKVANLC. Ser-299 bears the Phosphoserine; by autocatalysis mark. Phosphotyrosine; by SRC occurs at positions 311 and 332. Residues 347–601 enclose the Protein kinase domain; that stretch reads FTFQKVLGKG…TGNIRLHPFF (255 aa). 353–361 serves as a coordination point for ATP; the sequence is LGKGSFGKV. Tyr-372 is subject to Phosphotyrosine. Lys-376 contributes to the ATP binding site. Phosphothreonine is present on Thr-449. Asp-471 serves as the catalytic Proton acceptor. The residue at position 504 (Ser-504) is a Phosphoserine. Thr-505 is subject to Phosphothreonine; by autocatalysis. Tyr-565 carries the phosphotyrosine modification. An AGC-kinase C-terminal domain is found at 602 to 673; it reads KTINWNLLEK…VNPKYEQFLE (72 aa). Ser-643, Ser-652, and Ser-662 each carry phosphoserine.

This sequence belongs to the protein kinase superfamily. AGC Ser/Thr protein kinase family. PKC subfamily. In terms of assembly, interacts with PDPK1 (via N-terminal region). Interacts with RAD9A. Interacts with CDCP1. Interacts with MUC1. Interacts with VASP. Interacts with CAVIN3. Interacts with PRKD2 (via N-terminus and zing-finger domain 1 and 2) in response to oxidative stress; the interaction is independent of PRKD2 tyrosine phosphorylation. Interacts with PLSC3; interaction is enhanced by UV irradiation. Post-translationally, autophosphorylated and/or phosphorylated at Thr-505, within the activation loop; phosphorylation at Thr-505 is not a prerequisite for enzymatic activity. Autophosphorylated at Ser-299. Upon TNFSF10/TRAIL treatment, phosphorylated at Tyr-155; phosphorylation is required for its translocation to the endoplasmic reticulum and cleavage by caspase-3. Phosphorylated at Tyr-311, Tyr-332 and Tyr-565; phosphorylation of Tyr-311 and Tyr-565 following thrombin or zymosan stimulation potentiates its kinase activity. Phosphorylated by protein kinase PDPK1; phosphorylation is inhibited by the apoptotic C-terminal cleavage product of PKN2. Phosphorylated at Tyr-311 and Tyr-332 by SRC; phosphorylation leads to enhanced autophosphorylation at Thr-505. Phosphorylated at Tyr-311 through a SYK and SRC mechanism downstream of C-type lectin receptors activation, promoting its activation. In terms of processing, proteolytically cleaved into a catalytic subunit and a regulatory subunit by caspase-3 during apoptosis which results in kinase activation.

The protein resides in the cytoplasm. It is found in the nucleus. It localises to the perinuclear region. Its subcellular location is the cell membrane. The protein localises to the mitochondrion. The protein resides in the endomembrane system. The catalysed reaction is L-seryl-[protein] + ATP = O-phospho-L-seryl-[protein] + ADP + H(+). It carries out the reaction L-threonyl-[protein] + ATP = O-phospho-L-threonyl-[protein] + ADP + H(+). The enzyme catalyses L-tyrosyl-[protein] + ATP = O-phospho-L-tyrosyl-[protein] + ADP + H(+). Its activity is regulated as follows. Novel PKCs (PRKCD, PRKCE, PRKCH and PRKCQ) are calcium-insensitive, but activated by diacylglycerol (DAG) and phosphatidylserine. Three specific sites; Thr-505 (activation loop of the kinase domain), Ser-643 (turn motif) and Ser-662 (hydrophobic region), need to be phosphorylated for its full activation. Activated by caspase-3 (CASP3) cleavage during apoptosis. After cleavage, the pseudosubstrate motif in the regulatory subunit is released from the substrate recognition site of the catalytic subunit, which enables PRKCD to become constitutively activated. The catalytic subunit which displays properties of a sphingosine-dependent protein kinase is activated by D-erythro-sphingosine (Sph) or N,N-dimethyl-D-erythrosphingosine (DMS) or N,N,N-trimethyl-D-erythrosphingosine (TMS), but not by ceramide or Sph-1-P and is strongly inhibited by phosphatidylserine. In terms of biological role, calcium-independent, phospholipid- and diacylglycerol (DAG)-dependent serine/threonine-protein kinase that plays contrasting roles in cell death and cell survival by functioning as a pro-apoptotic protein during DNA damage-induced apoptosis, but acting as an anti-apoptotic protein during cytokine receptor-initiated cell death, is involved in tumor suppression, is required for oxygen radical production by NADPH oxidase and acts as a positive or negative regulator in platelet functional responses. Upon DNA damage, activates the promoter of the death-promoting transcription factor BCLAF1/Btf to trigger BCLAF1-mediated p53/TP53 gene transcription and apoptosis. In response to oxidative stress, interact with and activate CHUK/IKKA in the nucleus, causing the phosphorylation of p53/TP53. In the case of ER stress or DNA damage-induced apoptosis, can form a complex with the tyrosine-protein kinase ABL1 which trigger apoptosis independently of p53/TP53. In cytosol can trigger apoptosis by activating MAPK11 or MAPK14, inhibiting AKT1 and decreasing the level of X-linked inhibitor of apoptosis protein (XIAP), whereas in nucleus induces apoptosis via the activation of MAPK8 or MAPK9. Upon ionizing radiation treatment, is required for the activation of the apoptosis regulators BAX and BAK, which trigger the mitochondrial cell death pathway. Can phosphorylate MCL1 and target it for degradation which is sufficient to trigger for BAX activation and apoptosis. Is required for the control of cell cycle progression both at G1/S and G2/M phases. Mediates phorbol 12-myristate 13-acetate (PMA)-induced inhibition of cell cycle progression at G1/S phase by up-regulating the CDK inhibitor CDKN1A/p21 and inhibiting the cyclin CCNA2 promoter activity. In response to UV irradiation can phosphorylate CDK1, which is important for the G2/M DNA damage checkpoint activation. Can protect glioma cells from the apoptosis induced by TNFSF10/TRAIL, probably by inducing increased phosphorylation and subsequent activation of AKT1. Can also act as tumor suppressor upon mitogenic stimulation with PMA or TPA. In N-formyl-methionyl-leucyl-phenylalanine (fMLP)-treated cells, is required for NCF1 (p47-phox) phosphorylation and activation of NADPH oxidase activity, and regulates TNF-elicited superoxide anion production in neutrophils, by direct phosphorylation and activation of NCF1 or indirectly through MAPK1/3 (ERK1/2) signaling pathways. Involved in antifungal immunity by mediating phosphorylation and activation of CARD9 downstream of C-type lectin receptors activation, promoting interaction between CARD9 and BCL10, followed by activation of NF-kappa-B and MAP kinase p38 pathways. May also play a role in the regulation of NADPH oxidase activity in eosinophil after stimulation with IL5, leukotriene B4 or PMA. In collagen-induced platelet aggregation, acts a negative regulator of filopodia formation and actin polymerization by interacting with and negatively regulating VASP phosphorylation. Downstream of PAR1, PAR4 and CD36/GP4 receptors, regulates differentially platelet dense granule secretion; acts as a positive regulator in PAR-mediated granule secretion, whereas it negatively regulates CD36/GP4-mediated granule release. Phosphorylates MUC1 in the C-terminal and regulates the interaction between MUC1 and beta-catenin. The catalytic subunit phosphorylates 14-3-3 proteins (YWHAB, YWHAZ and YWHAH) in a sphingosine-dependent fashion. Phosphorylates ELAVL1 in response to angiotensin-2 treatment. Phosphorylates mitochondrial phospholipid scramblase 3 (PLSCR3), resulting in increased cardiolipin expression on the mitochondrial outer membrane which facilitates apoptosis. Phosphorylates SMPD1 which induces SMPD1 secretion. Truncated isoform 2 is inactive. This is Protein kinase C delta type from Rattus norvegicus (Rat).